We begin with the raw amino-acid sequence, 104 residues long: ATP-dependent Clp protease adapter protein ClpS (104 aa).

This sequence belongs to the ClpS family. In terms of assembly, binds to the N-terminal domain of the chaperone ClpA.

In terms of biological role, involved in the modulation of the specificity of the ClpAP-mediated ATP-dependent protein degradation. The protein is ATP-dependent Clp protease adapter protein ClpS of Burkholderia thailandensis (strain ATCC 700388 / DSM 13276 / CCUG 48851 / CIP 106301 / E264).